A 98-amino-acid polypeptide reads, in one-letter code: Late cornified envelope-like proline-rich protein 1 (98 aa).

Residues 1-26 (MSSDDKSKSNDPKTEPKNCDPKCEQK) form a disordered region.

This sequence belongs to the cornifin (SPRR) family.

The polypeptide is Late cornified envelope-like proline-rich protein 1 (LELP1) (Homo sapiens (Human)).